A 93-amino-acid polypeptide reads, in one-letter code: Small ribosomal subunit protein bS20c (93 aa).

It belongs to the bacterial ribosomal protein bS20 family.

It localises to the plastid. The protein resides in the chloroplast. Functionally, binds directly to 16S ribosomal RNA. The protein is Small ribosomal subunit protein bS20c of Trieres chinensis (Marine centric diatom).